A 1450-amino-acid polypeptide reads, in one-letter code: Collagen alpha-1(I) chain (1450 aa).

Residues 1–22 (MFSFVDNRLLVLLAACVLLVRA) form the signal peptide. Positions 23 to 148 (LDQEDIESGL…PPGLGGNFAP (126 aa)) are cleaved as a propeptide — N-terminal propeptide. Residues 31-90 (GLCHQEGTTYSDKDVWKPEPCVICVCDNGNIMCDDVTCGDYPVDCPNAEIPFGECCPVCP) form the VWFC domain. The tract at residues 97–1201 (YSEQTGVEGP…EPKSHGDGRY (1105 aa)) is disordered. Over residues 106–116 (PKGEVGPKGDR) the composition is skewed to basic and acidic residues. Positions 130–140 (LPGPPGPPGPP) are enriched in pro residues. Q149 is modified (pyrrolidone carboxylic acid). K157 carries the allysine modification. A compositionally biased stretch (pro residues) spans 166–181 (PMGPMGPRGPPGPSGS). Residues P176, P182, P194, P197, P212, P227, P242, and P248 each carry the 4-hydroxyproline modification. Over residues 182–206 (PGPQGFQGPSGEPGEPGAAGALGPR) the composition is skewed to low complexity. The span at 215–229 (NGDDGESGKPGRPGE) shows a compositional bias: basic and acidic residues. K251 carries the post-translational modification 5-hydroxylysine; alternate. K251 is a glycosylation site (O-linked (Gal...) hydroxylysine; alternate). Low complexity predominate over residues 266–292 (NGPAGPKGEPGNPGENGAPGQAGPRGL). 4-hydroxyproline is present on residues P275, P278, P284, P293, P299, P314, P320, P329, P332, P359, P362, P374, P380, P389, P395, P398, and P413. Residues 317 to 331 (AGPPGPTGPTGPPGF) show a composition bias toward pro residues. The segment covering 352–374 (PQGARGEPGAPGPAGAAGPSGNP) has biased composition (low complexity). The span at 378–387 (GQPGGKGATG) shows a compositional bias: gly residues. Over residues 388–443 (SPGIAGAPGFPGARGAPGPQGPAGAPGPKGNNGEPGAQGNKGEPGAKGEPGPAGVQ) the composition is skewed to low complexity. A 5-hydroxylysine modification is found at K416. 4-hydroxyproline occurs at positions 422, 437, 446, 461, 467, 476, and 482. Residues 471-480 (GERGGPGSRG) are compositionally biased toward gly residues. At K491 the chain carries 5-hydroxylysine. A 4-hydroxyproline mark is found at P494, P515, P521, P530, P533, P551, P569, P578, P590, P608, P626, P632, P644, P650, P656, and P668. 2 stretches are compositionally biased toward low complexity: residues 568–578 (FPGPKGAAGEP) and 586–596 (VAGPPGATGAP). Positions 637–650 (PAGEAGKPGEQGAP) are enriched in low complexity. Residues 669–678 (GERGGQGPAG) show a composition bias toward gly residues. Residues 679–701 (AQGPRGSPGSPGNDGAKGEAGAA) are compositionally biased toward low complexity. 5 positions are modified to 4-hydroxyproline: P689, P704, P710, P716, and P725. The span at 702–711 (GAPGGRGPPG) shows a compositional bias: gly residues. K737 carries the 5-hydroxylysine modification. P743, P758, P764, P785, P791, P794, P803, P809, P827, P836, and P845 each carry 4-hydroxyproline. The span at 796–806 (PAGICGPPGAD) shows a compositional bias: low complexity. Residues 817-869 (DAGPKGDAGAPGPAGPTGAPGPAGNVGAPGPKGTRGAAGPPGATGFPGAAGRL) show a composition bias toward low complexity. Position 848 is a 5-hydroxylysine (K848). 4-hydroxyproline is present on residues P857 and P863. The residue at position 871 (P871) is a 3-hydroxyproline. 15 positions are modified to 4-hydroxyproline: P872, P881, P884, P908, P914, P923, P932, P950, P962, P968, P983, P989, P995, P1004, and P1010. Over residues 917 to 943 (SGEKGSPGSDGPAGAPGIPGPQGIAGQ) the composition is skewed to low complexity. Over residues 982 to 997 (PPGPSGPPGLGGPPGE) the composition is skewed to pro residues. A 5-hydroxylysine modification is found at K1019. The span at 1028–1043 (SGPPGAPGAPGAPGPV) shows a compositional bias: pro residues. 4-hydroxyproline occurs at positions 1031, 1034, and 1037. The span at 1064–1078 (AGPSGVRGAPGPAGA) shows a compositional bias: low complexity. The segment covering 1079–1093 (RGDKGEAGEQGERGM) has biased composition (basic and acidic residues). Position 1082 is a 5-hydroxylysine (K1082). Position 1094 is a 5-hydroxylysine; alternate (K1094). The O-linked (Gal...) hydroxylysine; alternate glycan is linked to K1094. 2 positions are modified to 4-hydroxyproline: P1106 and P1109. The segment covering 1120 to 1129 (PSGPAGPRGP) has biased composition (pro residues). P1130 and P1145 each carry 4-hydroxyproline. Residues 1130 to 1145 (PGSSGSTGKDGVNGLP) are compositionally biased toward low complexity. P1150 bears the 3-hydroxyproline mark. P1151 carries the 4-hydroxyproline modification. Positions 1163-1178 (AGPPGPPGPPGPPGPP) are enriched in pro residues. P1165 is modified (3-hydroxyproline). A 4-hydroxyproline modification is found at P1166. P1168 bears the 3-hydroxyproline mark. A 4-hydroxyproline modification is found at P1169. P1171 carries the 3-hydroxyproline modification. 3 positions are modified to 4-hydroxyproline: P1172, P1175, and P1178. K1194 is modified (allysine). The propeptide at 1205 to 1450 (DDANVVRDRD…GIDIGPVCFL (246 aa)) is C-terminal propeptide. In terms of domain architecture, Fibrillar collagen NC1 spans 1215–1450 (LEVDTTLKSL…GIDIGPVCFL (236 aa)). Intrachain disulfides connect C1245–C1277, C1285–C1448, and C1356–C1401. Residues D1263, N1265, Q1266, C1268, and D1271 each coordinate Ca(2+). N-linked (GlcNAc...) asparagine glycosylation occurs at N1351.

The protein belongs to the fibrillar collagen family. As to quaternary structure, trimers of one alpha 2(I) and two alpha 1(I) chains. In terms of processing, contains mostly 4-hydroxyproline. Proline residues at the third position of the tripeptide repeating unit (G-X-Y) are hydroxylated in some or all of the chains. Post-translationally, contains 3-hydroxyproline at a few sites. This modification occurs on the first proline residue in the sequence motif Gly-Pro-Hyp, where Hyp is 4-hydroxyproline. Lysine residues at the third position of the tripeptide repeating unit (G-X-Y) are 5-hydroxylated in some or all of the chains. In terms of processing, O-glycosylated on hydroxylated lysine residues. The O-linked glycan consists of a Glc-Gal disaccharide.

The protein localises to the secreted. Its subcellular location is the extracellular space. It is found in the extracellular matrix. Type I collagen is a member of group I collagen (fibrillar forming collagen). In Cynops pyrrhogaster (Japanese fire-bellied newt), this protein is Collagen alpha-1(I) chain (COL1A1).